The chain runs to 344 residues: L-rhamnose-proton symporter (344 aa).

10 consecutive transmembrane segments (helical) span residues 4–24 (AITM…CFYA), 38–58 (WSVG…ATLL), 72–92 (TLLP…NYGL), 101–121 (MGIG…TPII), 131–151 (TQGG…VGIV), 175–195 (LLLA…MNAA), 214–234 (LPSY…FCFI), 259–279 (LLLS…YAWG), 290–310 (MSWM…GLVL), and 323–343 (VLSL…LGMA).

It belongs to the L-rhamnose transporter (TC 2.A.7.6) family.

Its subcellular location is the cell inner membrane. It catalyses the reaction L-rhamnopyranose(in) + H(+)(in) = L-rhamnopyranose(out) + H(+)(out). Uptake of L-rhamnose across the cytoplasmic membrane with the concomitant transport of protons into the cell (symport system). The polypeptide is L-rhamnose-proton symporter (Klebsiella pneumoniae (strain 342)).